We begin with the raw amino-acid sequence, 84 residues long: Magnetosome protein MamG (84 aa).

At 1–3 the chain is on the cytoplasmic side; that stretch reads MIK. The helical transmembrane segment at 4–24 threads the bilayer; it reads GIAGVGGTALGVGGGVAAPPV. At 25 to 40 the chain is on the lumenal side; that stretch reads SAAAVGSTLLAGKGVC. An LG repeat region spans residues 41-48; sequence LGLGLGLG. A helical membrane pass occupies residues 41-61; the sequence is LGLGLGLGAWGPVLLGVAGLA. Topologically, residues 62–84 are cytoplasmic; that stretch reads CAASLCDYLKNRKAQAEASAEPA.

It belongs to the magnetosome MamG (TC 9.B.95) protein family.

Its subcellular location is the magnetosome membrane. Functionally, plays a role in regulating magnetite crystal size. The sequence is that of Magnetosome protein MamG from Magnetospirillum gryphiswaldense (strain DSM 6361 / JCM 21280 / NBRC 15271 / MSR-1).